A 349-amino-acid polypeptide reads, in one-letter code: Anthranilate phosphoribosyltransferase (349 aa).

Residues Gly82, 85-86 (GD), 92-95 (NVST), 110-118 (KHGNRAVSG), and Ser122 contribute to the 5-phospho-alpha-D-ribose 1-diphosphate site. Anthranilate is bound at residue Gly82. Ser94 serves as a coordination point for Mg(2+). Asn113 contacts anthranilate. Arg168 contacts anthranilate. Positions 227 and 228 each coordinate Mg(2+).

It belongs to the anthranilate phosphoribosyltransferase family. In terms of assembly, homodimer. The cofactor is Mg(2+).

It carries out the reaction N-(5-phospho-beta-D-ribosyl)anthranilate + diphosphate = 5-phospho-alpha-D-ribose 1-diphosphate + anthranilate. Its pathway is amino-acid biosynthesis; L-tryptophan biosynthesis; L-tryptophan from chorismate: step 2/5. Its function is as follows. Catalyzes the transfer of the phosphoribosyl group of 5-phosphorylribose-1-pyrophosphate (PRPP) to anthranilate to yield N-(5'-phosphoribosyl)-anthranilate (PRA). This Pseudomonas syringae pv. tomato (strain ATCC BAA-871 / DC3000) protein is Anthranilate phosphoribosyltransferase.